A 401-amino-acid chain; its full sequence is Adaptive-response sensory kinase SasA (401 aa).

The Histidine kinase domain maps to 175–400 (MLVHDLRNPL…WFHFTLPVYP (226 aa)). The residue at position 178 (histidine 178) is a Phosphohistidine; by autocatalysis.

In terms of assembly, homooligomerizes. Interacts with KaiC. Participates in the KaiABC clock complex, whose core is composed of a KaiC homohexamer, 6 KaiB and up to 6 KaiA dimers. SasA and KaiB(fs) compete to bind to KaiC.

The catalysed reaction is ATP + protein L-histidine = ADP + protein N-phospho-L-histidine.. Member of the two-component regulatory system SasA/RpaA involved in genome-wide circadian gene expression. One of several clock output pathways. Participates in the Kai clock protein complex, the main circadian regulator in cyanobacteria, via its interaction with KaiC. KaiC enhances the autophosphorylation activity of SasA, which then transfers its phosphate group to RpaA to activate it. In addition to its output function, recruits fold-shifted KaiB (KaiB(fs)) to KaiC to cooperatively form the KaiB(6):KaiC(6) complex (independent of SasA kinase activity). Required for robustness of the circadian rhythm of gene expression and is involved in clock output, also required for adaptation to light/dark cycles. This Nostoc sp. (strain PCC 7120 / SAG 25.82 / UTEX 2576) protein is Adaptive-response sensory kinase SasA.